Reading from the N-terminus, the 258-residue chain is Phosphate import ATP-binding protein PstB (258 aa).

The region spanning 5 to 247 (IDISGLSAFY…ERIFSNPSVQ (243 aa)) is the ABC transporter domain. Residue 37–44 (GPSGCGKS) participates in ATP binding.

The protein belongs to the ABC transporter superfamily. Phosphate importer (TC 3.A.1.7) family. The complex is composed of two ATP-binding proteins (PstB), two transmembrane proteins (PstC and PstA) and a solute-binding protein (PstS).

It is found in the cell membrane. It catalyses the reaction phosphate(out) + ATP + H2O = ADP + 2 phosphate(in) + H(+). Part of the ABC transporter complex PstSACB involved in phosphate import. Responsible for energy coupling to the transport system. In Streptomyces griseus, this protein is Phosphate import ATP-binding protein PstB.